The primary structure comprises 174 residues: Large ribosomal subunit protein uL18 (174 aa).

This sequence belongs to the universal ribosomal protein uL18 family. In terms of assembly, part of the 50S ribosomal subunit. Contacts the 5S and 23S rRNAs.

This is one of the proteins that bind and probably mediate the attachment of the 5S RNA into the large ribosomal subunit, where it forms part of the central protuberance. The sequence is that of Large ribosomal subunit protein uL18 from Methanoregula boonei (strain DSM 21154 / JCM 14090 / 6A8).